We begin with the raw amino-acid sequence, 60 residues long: Metallothionein B (60 aa).

Residues 1–28 (MDPCECTKSGTCNCGGSCTCTNCSCTSC) are beta. Residues Cys-4, Cys-6, Cys-12, Cys-14, Cys-18, Cys-20, Cys-23, Cys-25, Cys-28, Cys-32, Cys-33, Cys-35, Cys-36, Cys-40, Cys-43, Cys-47, Cys-49, Cys-54, Cys-58, and Cys-59 each coordinate a divalent metal cation. Positions 29–60 (KKSCCPCCPSGCTKCASGCVCKGKTCDTSCCQ) are alpha.

This sequence belongs to the metallothionein superfamily. Type 1 family.

Functionally, metallothioneins have a high content of cysteine residues that bind various heavy metals. This Chaenocephalus aceratus (Blackfin icefish) protein is Metallothionein B (mtb).